The chain runs to 289 residues: MKDRLEQLKAKQLTQDDDTDAVEIAIDNTAFMDEFFSEIEETRLNIDKISEHVEEAKKLYSIILSAPIPEPKTKDDLEQLTTEIKKRANNVRNKLKSMEKHIEEDEVRSSADLRIRKSQHSVLSRKFVEVMTKYNEAQVDFRERSKGRIQRQLEITGKKTTDEELEEMLESGNPAIFTSGIIDSQISKQALSEIEGRHKDIVRLESSIKELHDMFMDIAMLVENQGEMLDNIELNVMHTVDHVEKARDETKKAVKYQSQARKKLIIIIVLVVVLLGILALIIGLSVGLN.

Topologically, residues 1–263 are cytoplasmic; the sequence is MKDRLEQLKA…VKYQSQARKK (263 aa). Positions 32–111 form a coiled coil; that stretch reads MDEFFSEIEE…IEEDEVRSSA (80 aa). A t-SNARE coiled-coil homology domain is found at 191–253; sequence LSEIEGRHKD…EKARDETKKA (63 aa). The chain crosses the membrane as a helical; Anchor for type IV membrane protein span at residues 264–284; the sequence is LIIIIVLVVVLLGILALIIGL. Over 285-289 the chain is Extracellular; sequence SVGLN.

This sequence belongs to the syntaxin family. As to quaternary structure, interacts with REEP6. Interacts with PRPH2 in rod and cone photoreceptors. Interacts with ROM1. Interacts with SNAP25. Interacts with VAMP2. Interacts with IPO5. As to expression, expressed in small intestine, kidney, pancreas, placenta as well as in retina. Weaker expression in lung, liver and heart. Not expressed in brain and skeletal muscle. In terms of tissue distribution, expressed only in the retina. Ubiquitously expressed.

The protein resides in the apical cell membrane. The protein localises to the nucleus. Functionally, potentially involved in docking of synaptic vesicles at presynaptic active zones. Apical receptor involved in membrane fusion of apical vesicles. Essential for survival of retinal photoreceetors. Its function is as follows. Functions as a regulator of gene expression. In Homo sapiens (Human), this protein is Syntaxin-3 (STX3).